A 111-amino-acid chain; its full sequence is Secreted RxLR effector protein 81 (111 aa).

An N-terminal signal peptide occupies residues 1-16 (MLVSMLLIIFPNGVSL). N-linked (GlcNAc...) asparagine glycosylation occurs at Asn52. The segment at 73 to 92 (KKFSSSDEDKSRDVRRRLRP) is disordered. Positions 88–91 (RRLR) match the RxLR-dEER motif.

The protein belongs to the RxLR effector family.

Its subcellular location is the secreted. The protein resides in the host nucleus. It localises to the host cytoplasm. Secreted effector that partially suppresses the host cell death induced by cell death-inducing proteins. The protein is Secreted RxLR effector protein 81 of Plasmopara viticola (Downy mildew of grapevine).